The primary structure comprises 450 residues: MRFKFSLIALSLEVVMIVSFALFVEYETSQNGSQKSASQQNASQQNAAAQQNASQQGNASSPAKEDQFFQLYPLFQHVHVMIFVGFGFLMTFLKKYGFSGVGFNLFLAALGLQWGTIVQGLLHSHGLKFPFRIKNMINADFSTATVLISFGAVLGKTSPIQMIIMTILEIAVFAGNEHLVTEIFKASDTGASMTIHAFGAYFGLAVAGVLYRSGLKHGHPNEESVYHSDLFAMIGTLFLWMFWPSFNSAIAQPENNQYRAIVNTYMSLAACVITAYALSSLVERRGRLDMVHIQNATLAGGVAVGTCADMEIPLYFAMTIGSIAGIISVLGYKFLSPLLAHKLMIHDTCGVHNLHGLPGVFGGLASIVAISWGKSTVSTMAMQATALGSSIGSAIVGGLVTGLILKLPVWNQPPDEYCFDDSVSWKVPKYRELDNYFFQHVTHNHVEHEV.

The Cytoplasmic segment spans residues 1-4 (MRFK). A helical transmembrane segment spans residues 5–25 (FSLIALSLEVVMIVSFALFVE). Topologically, residues 26-72 (YETSQNGSQKSASQQNASQQNAAAQQNASQQGNASSPAKEDQFFQLY) are extracellular. Asn-31, Asn-41, Asn-52, and Asn-58 each carry an N-linked (GlcNAc...) asparagine glycan. A disordered region spans residues 34–61 (QKSASQQNASQQNAAAQQNASQQGNASS). Residues 73–93 (PLFQHVHVMIFVGFGFLMTFL) traverse the membrane as a helical segment. The Cytoplasmic segment spans residues 94–97 (KKYG). A helical transmembrane segment spans residues 98 to 118 (FSGVGFNLFLAALGLQWGTIV). Topologically, residues 119–134 (QGLLHSHGLKFPFRIK) are extracellular. Residues 135–155 (NMINADFSTATVLISFGAVLG) form a helical membrane-spanning segment. The Cytoplasmic portion of the chain corresponds to 156 to 159 (KTSP). The helical transmembrane segment at 160-180 (IQMIIMTILEIAVFAGNEHLV) threads the bilayer. The Extracellular segment spans residues 181–189 (TEIFKASDT). A helical transmembrane segment spans residues 190–210 (GASMTIHAFGAYFGLAVAGVL). Over 211–229 (YRSGLKHGHPNEESVYHSD) the chain is Cytoplasmic. Residues 230 to 250 (LFAMIGTLFLWMFWPSFNSAI) traverse the membrane as a helical segment. Residues 251–260 (AQPENNQYRA) are Extracellular-facing. Residues 261-281 (IVNTYMSLAACVITAYALSSL) form a helical membrane-spanning segment. Residues 282–289 (VERRGRLD) lie on the Cytoplasmic side of the membrane. A helical transmembrane segment spans residues 290 to 307 (MVHIQNATLAGGVAVGTC). Over 308–311 (ADME) the chain is Extracellular. The chain crosses the membrane as a helical span at residues 312-332 (IPLYFAMTIGSIAGIISVLGY). Residues 333–349 (KFLSPLLAHKLMIHDTC) are Cytoplasmic-facing. The helical transmembrane segment at 350-370 (GVHNLHGLPGVFGGLASIVAI) threads the bilayer. At 371-384 (SWGKSTVSTMAMQA) the chain is on the extracellular side. The chain crosses the membrane as a helical span at residues 385 to 405 (TALGSSIGSAIVGGLVTGLIL). At 406-450 (KLPVWNQPPDEYCFDDSVSWKVPKYRELDNYFFQHVTHNHVEHEV) the chain is on the cytoplasmic side.

It belongs to the ammonium transporter (TC 2.A.49) family. Rh subfamily. In terms of assembly, homodimer. Heterotrimer; a RHCE monomer interacts with a RHAG homodimer. Component of the ankyrin-1 complex in the erythrocyte, composed of ANK1, RHCE, RHAG, SLC4A1, EPB42, GYPA, GYPB and AQP1. Interacts with GYPB (via the N-terminal); this interaction bridges the (RHAG)2(RHCE) heterotrimer with the SLC4A1 Band 3 I dimer complexed with GYPA. Glycosylated.

Its subcellular location is the membrane. It carries out the reaction methylamine(out) = methylamine(in). It catalyses the reaction NH4(+)(in) = NH4(+)(out). The enzyme catalyses CO2(out) = CO2(in). Component of the ankyrin-1 complex, a multiprotein complex involved in the stability and shape of the erythrocyte membrane. Heterotrimer with RHCE (RHAG)2(RHCE), that transports ammonium and its related derivative methylammonium, in both neutral and ionic forms, across the erythrocyte membrane. The transport of NH4(+) is electrogenic and masks the NH3 transport. Also, may act as a CO2 channel. Moreover in erythrocyte, regulates RHD membrane expression and is associated with rhesus blood group antigen expression. In Rattus norvegicus (Rat), this protein is Ammonium transporter Rh type A.